A 452-amino-acid chain; its full sequence is Glycine receptor subunit alpha-2 (452 aa).

A signal peptide spans 1-27 (MNRQLVNILTALFAFFLGTNHFREAFC). Over 28 to 256 (KDHDSRSGKH…KFHLERQMGY (229 aa)) the chain is Extracellular. Asn72 carries N-linked (GlcNAc...) asparagine glycosylation. Residue Arg99 coordinates glycine. Arg99 is a binding site for strychnine. The N-linked (GlcNAc...) asparagine glycan is linked to Asn103. Ser163 contributes to the glycine binding site. An intrachain disulfide couples Cys172 to Cys186. Zn(2+)-binding residues include Glu226 and Glu228. The cysteines at positions 232 and 243 are disulfide-linked. Thr238 is a glycine binding site. His249 is a Zn(2+) binding site. A helical transmembrane segment spans residues 257 to 278 (YLIQMYIPSLLIVILSWVSFWI). Residues 279-283 (NMDAA) lie on the Cytoplasmic side of the membrane. A helical transmembrane segment spans residues 284–304 (PARVALGITTVLTMTTQSSGS). Residues 305–315 (RASLPKVSYVK) are Extracellular-facing. Residues 316–336 (AIDIWMAVCLLFVFAALLEYA) traverse the membrane as a helical segment. Residues 337 to 420 (AVNFVSRQHK…FVDRAKRIDT (84 aa)) are Cytoplasmic-facing. Residues 421–441 (ISRAAFPLAFLIFNIFYWITY) form a helical membrane-spanning segment. The Extracellular segment spans residues 442–452 (KIIRHEDVHKK).

Belongs to the ligand-gated ion channel (TC 1.A.9) family. Glycine receptor (TC 1.A.9.3) subfamily. GLRA2 sub-subfamily. Interacts with GLRB. Heteropentamer composed of GLRA2 and GLRB; functional GLRB-GLRA2 heteropentamers contain four GLRA2 subunits and one GLRB subunit, although alternative subunit composition cannot be excluded. Homopentamer (in vitro). Both homopentamers and heteropentamers form functional ion channels, but their characteristics are subtly different.

Its subcellular location is the postsynaptic cell membrane. It is found in the synapse. The protein localises to the cell membrane. It localises to the cell projection. The catalysed reaction is chloride(in) = chloride(out). Its activity is regulated as follows. Channel opening is triggered by extracellular glycine. Channel opening is also triggered by taurine and beta-alanine. Inhibited by strychnine. Inhibited by picrotoxin. In terms of biological role, subunit of heteromeric glycine-gated chloride channels. Plays a role in synaptic plasticity. Contributes to the generation of inhibitory postsynaptic currents, and is involved in the down-regulation of neuronal excitability. Plays a role in cellular responses to ethanol. The polypeptide is Glycine receptor subunit alpha-2 (Rattus norvegicus (Rat)).